Here is a 144-residue protein sequence, read N- to C-terminus: Large ribosomal subunit protein uL15 (144 aa).

Residues 1-56 (MELNNLKPAEGAKHAKRRVGRGIGSGLGKTAGRGHKGQKSRSGGFHKVGFEGGQMP) are disordered. Residues 21–31 (RGIGSGLGKTA) show a composition bias toward gly residues.

The protein belongs to the universal ribosomal protein uL15 family. In terms of assembly, part of the 50S ribosomal subunit.

Binds to the 23S rRNA. The polypeptide is Large ribosomal subunit protein uL15 (Burkholderia mallei (strain NCTC 10247)).